Consider the following 380-residue polypeptide: Queuine tRNA-ribosyltransferase (380 aa).

Catalysis depends on Asp96, which acts as the Proton acceptor. Residues 96–100, Asp150, Gln193, and Gly220 each bind substrate; that span reads DSGGF. The segment at 251-257 is RNA binding; it reads GVGAPDS. Asp270 serves as the catalytic Nucleophile. The segment at 275-279 is RNA binding; important for wobble base 34 recognition; it reads TRIAR. Zn(2+) is bound by residues Cys308, Cys310, Cys313, and His339.

Belongs to the queuine tRNA-ribosyltransferase family. In terms of assembly, homodimer. Within each dimer, one monomer is responsible for RNA recognition and catalysis, while the other monomer binds to the replacement base PreQ1. It depends on Zn(2+) as a cofactor.

The catalysed reaction is 7-aminomethyl-7-carbaguanine + guanosine(34) in tRNA = 7-aminomethyl-7-carbaguanosine(34) in tRNA + guanine. The protein operates within tRNA modification; tRNA-queuosine biosynthesis. Catalyzes the base-exchange of a guanine (G) residue with the queuine precursor 7-aminomethyl-7-deazaguanine (PreQ1) at position 34 (anticodon wobble position) in tRNAs with GU(N) anticodons (tRNA-Asp, -Asn, -His and -Tyr). Catalysis occurs through a double-displacement mechanism. The nucleophile active site attacks the C1' of nucleotide 34 to detach the guanine base from the RNA, forming a covalent enzyme-RNA intermediate. The proton acceptor active site deprotonates the incoming PreQ1, allowing a nucleophilic attack on the C1' of the ribose to form the product. After dissociation, two additional enzymatic reactions on the tRNA convert PreQ1 to queuine (Q), resulting in the hypermodified nucleoside queuosine (7-(((4,5-cis-dihydroxy-2-cyclopenten-1-yl)amino)methyl)-7-deazaguanosine). In Streptococcus mutans serotype c (strain ATCC 700610 / UA159), this protein is Queuine tRNA-ribosyltransferase.